A 305-amino-acid chain; its full sequence is Pseudouridine-5'-phosphate glycosidase (305 aa).

Glutamate 28 functions as the Proton donor in the catalytic mechanism. Substrate is bound by residues lysine 89 and valine 109. Aspartate 141 is a binding site for Mn(2+). Substrate is bound at residue 143 to 145 (SAD). The active-site Nucleophile is lysine 162.

Belongs to the pseudouridine-5'-phosphate glycosidase family. As to quaternary structure, homotrimer. Mn(2+) serves as cofactor.

It catalyses the reaction D-ribose 5-phosphate + uracil = psi-UMP + H2O. Its function is as follows. Catalyzes the reversible cleavage of pseudouridine 5'-phosphate (PsiMP) to ribose 5-phosphate and uracil. Functions biologically in the cleavage direction, as part of a pseudouridine degradation pathway. The protein is Pseudouridine-5'-phosphate glycosidase of Dinoroseobacter shibae (strain DSM 16493 / NCIMB 14021 / DFL 12).